The sequence spans 128 residues: Transmembrane protein 234 homolog (128 aa).

Transmembrane regions (helical) follow at residues 3 to 23 (TYNI…NPLI), 53 to 73 (PSYT…FYTL), 80 to 100 (LVVP…GMLL), and 104 to 124 (VLHF…TICV).

Belongs to the TMEM234 family.

It is found in the membrane. The sequence is that of Transmembrane protein 234 homolog from Dictyostelium discoideum (Social amoeba).